We begin with the raw amino-acid sequence, 298 residues long: Tyrosine recombinase XerC (298 aa).

Positions 1–84 constitute a Core-binding (CB) domain; sequence MNHIQEAFLN…TLRTLYEYWM (84 aa). A Tyr recombinase domain is found at 105-286; the sequence is YLPQFSLEEE…SNQQLRKVYL (182 aa). Catalysis depends on residues arginine 145, lysine 169, histidine 238, arginine 241, and histidine 264. Residue tyrosine 273 is the O-(3'-phospho-DNA)-tyrosine intermediate of the active site.

Belongs to the 'phage' integrase family. XerC subfamily. In terms of assembly, forms a cyclic heterotetrameric complex composed of two molecules of XerC and two molecules of XerD.

The protein resides in the cytoplasm. In terms of biological role, site-specific tyrosine recombinase, which acts by catalyzing the cutting and rejoining of the recombining DNA molecules. The XerC-XerD complex is essential to convert dimers of the bacterial chromosome into monomers to permit their segregation at cell division. It also contributes to the segregational stability of plasmids. The chain is Tyrosine recombinase XerC from Staphylococcus aureus.